The following is an 80-amino-acid chain: UPF0248 protein M1425_2629 (80 aa).

Belongs to the UPF0248 family.

The chain is UPF0248 protein M1425_2629 from Saccharolobus islandicus (strain M.14.25 / Kamchatka #1) (Sulfolobus islandicus).